A 374-amino-acid chain; its full sequence is ORC1-type DNA replication protein 6 (374 aa).

ATP-binding positions include 66–70 (TGKTT), Tyr209, and Arg221.

Belongs to the CDC6/cdc18 family.

Involved in regulation of DNA replication. This Halobacterium salinarum (strain ATCC 700922 / JCM 11081 / NRC-1) (Halobacterium halobium) protein is ORC1-type DNA replication protein 6 (orc6).